Here is a 204-residue protein sequence, read N- to C-terminus: Putative uracil phosphoribosyltransferase urg2 (204 aa).

Residues Arg-75, Arg-100, and 126-134 contribute to the 5-phospho-alpha-D-ribose 1-diphosphate site; that span reads DPVMATGGT. Tyr-187 contacts D-ribose 5-phosphate. Residues Leu-188 and 193-195 contribute to the uracil site; that span reads GDI. A 5-phospho-alpha-D-ribose 1-diphosphate-binding site is contributed by Asp-194.

Belongs to the UPRTase family. It depends on Mg(2+) as a cofactor.

The protein resides in the cytoplasm. It is found in the nucleus. The enzyme catalyses UMP + diphosphate = 5-phospho-alpha-D-ribose 1-diphosphate + uracil. It participates in pyrimidine metabolism; UMP biosynthesis via salvage pathway; UMP from uracil: step 1/1. With respect to regulation, allosterically activated by GTP. Functionally, catalyzes the conversion of uracil and 5-phospho-alpha-D-ribose 1-diphosphate (PRPP) to UMP and diphosphate. This is Putative uracil phosphoribosyltransferase urg2 from Schizosaccharomyces pombe (strain 972 / ATCC 24843) (Fission yeast).